The sequence spans 351 residues: Protein-glutamate methylesterase/protein-glutamine glutaminase 2 (351 aa).

The Response regulatory domain occupies 5-122 (RVICVDDSAL…RDGLLDYSEL (118 aa)). Asp56 is subject to 4-aspartylphosphate. Residues 154 to 341 (LNSSEKLVIL…PLPAMSERIL (188 aa)) form the CheB-type methylesterase domain. Residues Ser166, His192, and Asp289 contribute to the active site.

This sequence belongs to the CheB family. In terms of processing, phosphorylated by CheA. Phosphorylation of the N-terminal regulatory domain activates the methylesterase activity.

The protein localises to the cytoplasm. It catalyses the reaction [protein]-L-glutamate 5-O-methyl ester + H2O = L-glutamyl-[protein] + methanol + H(+). The enzyme catalyses L-glutaminyl-[protein] + H2O = L-glutamyl-[protein] + NH4(+). Involved in chemotaxis. Part of a chemotaxis signal transduction system that modulates chemotaxis in response to various stimuli. Catalyzes the demethylation of specific methylglutamate residues introduced into the chemoreceptors (methyl-accepting chemotaxis proteins or MCP) by CheR. Also mediates the irreversible deamidation of specific glutamine residues to glutamic acid. The protein is Protein-glutamate methylesterase/protein-glutamine glutaminase 2 of Bordetella avium (strain 197N).